A 296-amino-acid chain; its full sequence is Polyamine aminopropyltransferase (296 aa).

Positions 5 to 238 (ELWYETLHAN…GIMTFAWATQ (234 aa)) constitute a PABS domain. Gln-33 provides a ligand contact to S-methyl-5'-thioadenosine. Spermidine-binding residues include His-64 and Asp-88. S-methyl-5'-thioadenosine is bound by residues Glu-108 and 140–141 (DG). Asp-158 (proton acceptor) is an active-site residue. Spermidine is bound at residue 158–161 (DCTD). Pro-165 serves as a coordination point for S-methyl-5'-thioadenosine.

It belongs to the spermidine/spermine synthase family. In terms of assembly, homodimer or homotetramer.

The protein resides in the cytoplasm. It catalyses the reaction S-adenosyl 3-(methylsulfanyl)propylamine + putrescine = S-methyl-5'-thioadenosine + spermidine + H(+). The protein operates within amine and polyamine biosynthesis; spermidine biosynthesis; spermidine from putrescine: step 1/1. Catalyzes the irreversible transfer of a propylamine group from the amino donor S-adenosylmethioninamine (decarboxy-AdoMet) to putrescine (1,4-diaminobutane) to yield spermidine. The protein is Polyamine aminopropyltransferase of Yersinia pseudotuberculosis serotype O:3 (strain YPIII).